The chain runs to 274 residues: MRQVAIYGKGGIGKSTTTQNTVAALAESGKKVMVVGCDPKADSTRLLLHGLNQKTVLDTLRDEGDDIELESILKTGFGETRCVESGGPEPGVGCAGRGIITSINMLEQLGAYTDDLDYVFYDVLGDVVCGGFAMPIREGKAREIYIVASGELMALYAANNIAKGIKKYAETGGVRLGGIICNSRKADNEYALVKAVAEEIGTQMIHFVPRDNIVQRAEINKMTVIDFDPAANQANEYRKLAKAIDENQMFVVPKPMTQDRLEELMMKHGFLDAV.

8 to 15 (GKGGIGKS) is an ATP binding site. C94 is a binding site for [4Fe-4S] cluster. ADP-ribosylarginine; by dinitrogenase reductase ADP-ribosyltransferase is present on R97. C129 contributes to the [4Fe-4S] cluster binding site.

The protein belongs to the NifH/BchL/ChlL family. In terms of assembly, homodimer. [4Fe-4S] cluster is required as a cofactor. Post-translationally, the reversible ADP-ribosylation of Arg-97 inactivates the nitrogenase reductase and regulates nitrogenase activity.

It catalyses the reaction N2 + 8 reduced [2Fe-2S]-[ferredoxin] + 16 ATP + 16 H2O = H2 + 8 oxidized [2Fe-2S]-[ferredoxin] + 2 NH4(+) + 16 ADP + 16 phosphate + 6 H(+). The key enzymatic reactions in nitrogen fixation are catalyzed by the nitrogenase complex, which has 2 components: the iron protein and the molybdenum-iron protein. The sequence is that of Nitrogenase iron protein from Methanocella arvoryzae (strain DSM 22066 / NBRC 105507 / MRE50).